Here is a 138-residue protein sequence, read N- to C-terminus: Putative pre-16S rRNA nuclease (138 aa).

It belongs to the YqgF nuclease family.

The protein localises to the cytoplasm. Its function is as follows. Could be a nuclease involved in processing of the 5'-end of pre-16S rRNA. The sequence is that of Putative pre-16S rRNA nuclease from Cronobacter sakazakii (strain ATCC BAA-894) (Enterobacter sakazakii).